Here is a 113-residue protein sequence, read N- to C-terminus: Large ribosomal subunit protein uL22 (113 aa).

The protein belongs to the universal ribosomal protein uL22 family. In terms of assembly, part of the 50S ribosomal subunit.

Functionally, this protein binds specifically to 23S rRNA; its binding is stimulated by other ribosomal proteins, e.g. L4, L17, and L20. It is important during the early stages of 50S assembly. It makes multiple contacts with different domains of the 23S rRNA in the assembled 50S subunit and ribosome. In terms of biological role, the globular domain of the protein is located near the polypeptide exit tunnel on the outside of the subunit, while an extended beta-hairpin is found that lines the wall of the exit tunnel in the center of the 70S ribosome. This Geobacillus thermodenitrificans (strain NG80-2) protein is Large ribosomal subunit protein uL22.